Here is a 103-residue protein sequence, read N- to C-terminus: MYAVIKTGGKQYKVAAGEKLKIEQIPAEIGSEITLDQVLAVGESASLKLGDPLVNGAAVMATVVSQGRHDKVTIFKMRRRKHYQKHQGHRQNFTEILINTIKA.

It belongs to the bacterial ribosomal protein bL21 family. Part of the 50S ribosomal subunit. Contacts protein L20.

This protein binds to 23S rRNA in the presence of protein L20. This chain is Large ribosomal subunit protein bL21, found in Polynucleobacter necessarius subsp. necessarius (strain STIR1).